A 273-amino-acid chain; its full sequence is Flagellin FljN (273 aa).

The protein belongs to the bacterial flagellin family. In C.crescentus, the flagellar filament is composed of multiple flagellins of 29 kDa; 27 kDa and 25 kDa.

It is found in the secreted. The protein resides in the bacterial flagellum. Functionally, flagellin is the subunit protein which polymerizes to form the filaments of bacterial flagella. This chain is Flagellin FljN (fljN), found in Caulobacter vibrioides (strain ATCC 19089 / CIP 103742 / CB 15) (Caulobacter crescentus).